A 424-amino-acid polypeptide reads, in one-letter code: 23S rRNA (uracil(1939)-C(5))-methyltransferase RlmD (424 aa).

Positions 1–56 (MEKFPAVTVFDLDYQGRGVAKIDGQVVFIEGALPDETVTFCKTSAKKQFIEAVVDE) constitute a TRAM domain. Residues Cys69, Cys75, Cys78, and Cys155 each coordinate [4Fe-4S] cluster. Positions 255, 284, 289, 305, 333, and 354 each coordinate S-adenosyl-L-methionine. The Nucleophile role is filled by Cys380.

This sequence belongs to the class I-like SAM-binding methyltransferase superfamily. RNA M5U methyltransferase family. RlmD subfamily.

It carries out the reaction uridine(1939) in 23S rRNA + S-adenosyl-L-methionine = 5-methyluridine(1939) in 23S rRNA + S-adenosyl-L-homocysteine + H(+). Catalyzes the formation of 5-methyl-uridine at position 1939 (m5U1939) in 23S rRNA. This is 23S rRNA (uracil(1939)-C(5))-methyltransferase RlmD from Dichelobacter nodosus (strain VCS1703A).